The following is a 447-amino-acid chain: Omega-3 fatty acid desaturase, chloroplastic (447 aa).

A Histidine box-1 motif is present at residues 167-171 (HDCGH). A Histidine box-2 motif is present at residues 203-207 (HRTHH). Positions 370 to 374 (HVIHH) match the Histidine box-3 motif.

Belongs to the fatty acid desaturase type 1 family.

It is found in the plastid. Its subcellular location is the chloroplast membrane. The protein operates within lipid metabolism; polyunsaturated fatty acid biosynthesis. Functionally, chloroplast omega-3 fatty acid desaturase introduces the third double bond in the biosynthesis of 16:3 and 18:3 fatty acids, important constituents of plant membranes. It is thought to use ferredoxin as an electron donor and to act on fatty acids esterified to galactolipids, sulfolipids and phosphatidylglycerol. The chain is Omega-3 fatty acid desaturase, chloroplastic (FAD7) from Sesamum indicum (Oriental sesame).